A 257-amino-acid polypeptide reads, in one-letter code: Phycoerythrobilin:ferredoxin oxidoreductase (257 aa).

Belongs to the HY2 family.

The catalysed reaction is (3Z)-phycoerythrobilin + oxidized 2[4Fe-4S]-[ferredoxin] = 15,16-dihydrobiliverdin + reduced 2[4Fe-4S]-[ferredoxin] + 2 H(+). Functionally, catalyzes the two-electron reduction of the C2 and C3(1) diene system of 15,16-dihydrobiliverdin. The chain is Phycoerythrobilin:ferredoxin oxidoreductase (pebB) from Synechococcus sp. (strain WH8020).